The following is a 503-amino-acid chain: Anaerobic nitric oxide reductase flavorubredoxin (503 aa).

The tract at residues 30 to 210 (LQGSSYNSYL…PFSRLVTAKI (181 aa)) is zinc metallo-hydrolase. Residues His79, Glu81, Asp83, His147, Asp166, and His227 each contribute to the Fe cation site. Residues 254–393 (ITLFYDTMSN…ICREHGREIA (140 aa)) form the Flavodoxin-like domain. FMN is bound by residues 260–264 (TMSNN) and 342–369 (AFGS…ETTL). The region spanning 451–502 (NGCMQCSVCQWIYDPALGEPMQDVTPGTMWSDVPDSFLCPECGLGKDVFNPI) is the Rubredoxin-like domain. Cys456, Cys459, Cys489, and Cys492 together coordinate Fe cation.

This sequence in the N-terminal section; belongs to the zinc metallo-hydrolase group 3 family. As to quaternary structure, homotetramer. It depends on Fe cation as a cofactor. FMN serves as cofactor.

The protein localises to the cytoplasm. It participates in nitrogen metabolism; nitric oxide reduction. Functionally, anaerobic nitric oxide reductase; uses NADH to detoxify nitric oxide (NO), protecting several 4Fe-4S NO-sensitive enzymes. Has at least 2 reductase partners, only one of which (NorW, flavorubredoxin reductase) has been identified. NO probably binds to the di-iron center; electrons enter from the NorW at rubredoxin and are transferred sequentially to the FMN center and the di-iron center. Also able to function as an aerobic oxygen reductase. The protein is Anaerobic nitric oxide reductase flavorubredoxin of Pectobacterium carotovorum subsp. carotovorum (strain PC1).